Reading from the N-terminus, the 309-residue chain is Probable 2,4-dienoyl-CoA reductase 3 [(3E)-enoyl-CoA-producing] (309 aa).

NADP(+)-binding positions include Gly32–Ile37, Arg57, and Asp83. Arg57 is a binding site for substrate. The substrate site is built by Phe116 and Ser124. The Proton acceptor role is filled by Tyr166. NADP(+)-binding positions include Lys181 and Pro207–Ile210. Position 218 (Arg218) interacts with substrate.

The protein belongs to the short-chain dehydrogenases/reductases (SDR) family. 2,4-dienoyl-CoA reductase subfamily.

It carries out the reaction a (2E,4E)-dienoyl-CoA + NADPH + H(+) = a 4,5-saturated-(3E)-enoyl-CoA + NADP(+). It catalyses the reaction a (2E,4Z)-dienoyl-CoA + NADPH + H(+) = a 4,5-saturated-(3E)-enoyl-CoA + NADP(+). In terms of biological role, auxiliary enzyme of beta-oxidation. It participates in the metabolism of unsaturated fatty enoyl-CoA esters having double bonds in both even- and odd-numbered positions. Catalyzes the NADP-dependent reduction of 2,4-dienoyl-CoA to yield trans-3-enoyl-CoA. This Caenorhabditis elegans protein is Probable 2,4-dienoyl-CoA reductase 3 [(3E)-enoyl-CoA-producing].